We begin with the raw amino-acid sequence, 328 residues long: Phosphate acyltransferase (328 aa).

Belongs to the PlsX family. As to quaternary structure, homodimer. Probably interacts with PlsY.

It is found in the cytoplasm. The catalysed reaction is a fatty acyl-[ACP] + phosphate = an acyl phosphate + holo-[ACP]. Its pathway is lipid metabolism; phospholipid metabolism. Its function is as follows. Catalyzes the reversible formation of acyl-phosphate (acyl-PO(4)) from acyl-[acyl-carrier-protein] (acyl-ACP). This enzyme utilizes acyl-ACP as fatty acyl donor, but not acyl-CoA. The sequence is that of Phosphate acyltransferase from Geobacillus thermodenitrificans (strain NG80-2).